A 443-amino-acid chain; its full sequence is ATP synthase subunit b-delta (443 aa).

Residues 1–168 (MSTFIGQLIG…PSDAALDDAV (168 aa)) are ATP synthase subunit b. The chain crosses the membrane as a helical span at residues 4 to 24 (FIGQLIGFAVIVFLLVRFVVP). The segment at 169–443 (GSRMRSTSRE…LASAETQLPD (275 aa)) is ATP synthase subunit delta.

In the N-terminal section; belongs to the ATPase B chain family. The protein in the C-terminal section; belongs to the ATPase delta chain family. In terms of assembly, F-type ATPases have 2 components, F(1) - the catalytic core - and F(0) - the membrane proton channel. F(1) has five subunits: alpha(3), beta(3), gamma(1), delta(1), epsilon(1). F(0) has three main subunits: a(1), b(2) and c(10-14). The alpha and beta chains form an alternating ring which encloses part of the gamma chain. F(1) is attached to F(0) by a central stalk formed by the gamma and epsilon chains, while a peripheral stalk is formed by the delta and b chains.

The protein localises to the cell membrane. Functionally, f(1)F(0) ATP synthase produces ATP from ADP in the presence of a proton or sodium gradient. F-type ATPases consist of two structural domains, F(1) containing the extramembraneous catalytic core and F(0) containing the membrane proton channel, linked together by a central stalk and a peripheral stalk. During catalysis, ATP synthesis in the catalytic domain of F(1) is coupled via a rotary mechanism of the central stalk subunits to proton translocation. Its function is as follows. This fusion protein includes a component of the F(0) channel (subunit b) and of the F(1) subunit (subunit delta). Two copies of subunit b and one of delta together form the peripheral 'stator' stalk which links F(1) to F(0). This is ATP synthase subunit b-delta (atpFH) from Mycobacterium sp. (strain JLS).